Here is a 340-residue protein sequence, read N- to C-terminus: Ketol-acid reductoisomerase (NADP(+)) (340 aa).

The KARI N-terminal Rossmann domain occupies 3–182; the sequence is VQMEYEKDVK…GAARVGLLET (180 aa). Residues 26–29, R49, S53, and 83–86 contribute to the NADP(+) site; these read YGSQ and DEIQ. The active site involves H108. G134 provides a ligand contact to NADP(+). The KARI C-terminal knotted domain occupies 183–328; the sequence is TYKEETEEDL…AELRKAMPFV (146 aa). Mg(2+) contacts are provided by D191, E195, E227, and E231. Position 252 (S252) interacts with substrate.

This sequence belongs to the ketol-acid reductoisomerase family. Requires Mg(2+) as cofactor.

It catalyses the reaction (2R)-2,3-dihydroxy-3-methylbutanoate + NADP(+) = (2S)-2-acetolactate + NADPH + H(+). The enzyme catalyses (2R,3R)-2,3-dihydroxy-3-methylpentanoate + NADP(+) = (S)-2-ethyl-2-hydroxy-3-oxobutanoate + NADPH + H(+). It functions in the pathway amino-acid biosynthesis; L-isoleucine biosynthesis; L-isoleucine from 2-oxobutanoate: step 2/4. The protein operates within amino-acid biosynthesis; L-valine biosynthesis; L-valine from pyruvate: step 2/4. In terms of biological role, involved in the biosynthesis of branched-chain amino acids (BCAA). Catalyzes an alkyl-migration followed by a ketol-acid reduction of (S)-2-acetolactate (S2AL) to yield (R)-2,3-dihydroxy-isovalerate. In the isomerase reaction, S2AL is rearranged via a Mg-dependent methyl migration to produce 3-hydroxy-3-methyl-2-ketobutyrate (HMKB). In the reductase reaction, this 2-ketoacid undergoes a metal-dependent reduction by NADPH to yield (R)-2,3-dihydroxy-isovalerate. The protein is Ketol-acid reductoisomerase (NADP(+)) of Streptococcus pneumoniae (strain CGSP14).